We begin with the raw amino-acid sequence, 137 residues long: Putative pre-16S rRNA nuclease (137 aa).

The protein belongs to the YqgF nuclease family.

The protein localises to the cytoplasm. In terms of biological role, could be a nuclease involved in processing of the 5'-end of pre-16S rRNA. In Clostridium botulinum (strain 657 / Type Ba4), this protein is Putative pre-16S rRNA nuclease.